The following is a 1251-amino-acid chain: Botulinum neurotoxin type E (1251 aa).

Residue H212 coordinates Zn(2+). E213 is a catalytic residue. Positions 216 and 251 each coordinate Zn(2+). C412 and C426 form a disulfide bridge. The translocation domain (TD) stretch occupies residues K423–L819. The segment at N466–N515 is belt. Positions K845–P1067 are N-terminus of receptor binding domain (N-RBD). The segment at N1068–K1251 is C-terminus of receptor binding domain (C-RBD). The Host ganglioside-binding motif motif lies at S1221–Y1224.

The protein belongs to the peptidase M27 family. In terms of assembly, heterodimer; disulfide-linked heterodimer of a light chain (LC) and a heavy chain (HC). The LC has the proteolytic/pharmacological activity, while the N- and C-terminal of the HC mediate channel formation and toxin binding, respectively. Interacts with host synaptic vesicle glycoproteins SV2A and SV2B which probably serve as coreceptors. It depends on Zn(2+) as a cofactor.

It is found in the secreted. The protein resides in the host cytoplasm. Its subcellular location is the host cytosol. The protein localises to the host synapse. It localises to the host presynaptic cell membrane. It is found in the host cytoplasmic vesicle. The protein resides in the host secretory vesicle. Its subcellular location is the host synaptic vesicle membrane. It catalyses the reaction Limited hydrolysis of proteins of the neuroexocytosis apparatus, synaptobrevins, SNAP25 or syntaxin. No detected action on small molecule substrates.. Functionally, botulinum toxin causes flaccid paralysis by inhibiting neurotransmitter (acetylcholine) release from the presynaptic membranes of nerve terminals of eukaryotic host skeletal and autonomic nervous system, with frequent heart or respiratory failure. Precursor of botulinum neurotoxin E which has 2 coreceptors; complex polysialylated gangliosides found on neural tissue and specific membrane-anchored proteins found in synaptic vesicles. Receptor proteins are exposed on host presynaptic cell membrane during neurotransmitter release, when the toxin heavy chain (HC) binds to them. Upon synaptic vesicle recycling the toxin is taken up via the endocytic pathway. When the pH of the toxin-containing endosome drops a structural rearrangement occurs so that the N-terminus of the HC forms pores that allows the light chain (LC) to translocate into the cytosol. Once in the cytosol the disulfide bond linking the 2 subunits is reduced and LC cleaves its target protein on synaptic vesicles, preventing their fusion with the cytoplasmic membrane and thus neurotransmitter release. Its function is as follows. Has proteolytic activity. After translocation into the eukaryotic host cytosol, LC hydrolyzes the '180-Arg-|-Ile-181' bond in SNAP25, blocking neurotransmitter release. In terms of biological role, responsible for host epithelial cell transcytosis, host nerve cell targeting and translocation of light chain (LC) into host cytosol. Composed of 3 subdomains; the translocation domain (TD), and N-terminus and C-terminus of the receptor-binding domain (RBD). The RBD is responsible for the adherence of the toxin to the cell surface. It simultaneously recognizes 2 coreceptors; host polysialated gangliosides and the receptor proteins SV2A and SV2B in close proximity on host synaptic vesicles. Interaction with SV2 proteins requires SV2 glycosylation. The N-terminus of the TD wraps an extended belt around the perimeter of the LC, protecting Zn(2+) in the active site; it may also prevent premature LC dissociation from the translocation channel and protect toxin prior to translocation. The TD inserts into synaptic vesicle membrane to allow translocation into the host cytosol. Binds ganglioside GD1a in vitro. The sequence is that of Botulinum neurotoxin type E from Clostridium butyricum.